The primary structure comprises 249 residues: Isoprenyl transferase (249 aa).

Asp25 is a catalytic residue. Residue Asp25 participates in Mg(2+) binding. Residues 26–29 (GNGR), Trp30, Arg38, His42, and 70–72 (STE) each bind substrate. The active-site Proton acceptor is Asn73. Residues Trp74, Arg76, Arg197, and 203-205 (RLS) contribute to the substrate site. Glu216 is a binding site for Mg(2+).

The protein belongs to the UPP synthase family. Homodimer. Requires Mg(2+) as cofactor.

Its function is as follows. Catalyzes the condensation of isopentenyl diphosphate (IPP) with allylic pyrophosphates generating different type of terpenoids. In Streptococcus mutans serotype c (strain ATCC 700610 / UA159), this protein is Isoprenyl transferase.